Reading from the N-terminus, the 397-residue chain is S-adenosylmethionine synthase (397 aa).

His15 lines the ATP pocket. Position 17 (Asp17) interacts with Mg(2+). Glu43 serves as a coordination point for K(+). Residues Glu56 and Gln99 each contribute to the L-methionine site. Residues 99 to 109 are flexible loop; sequence QSGDIAMGVDE. ATP-binding positions include 175–177, 241–242, Asp250, 256–257, Ala273, and Lys277; these read DGK, RF, and RK. Asp250 contributes to the L-methionine binding site. An L-methionine-binding site is contributed by Lys281.

It belongs to the AdoMet synthase family. Homotetramer; dimer of dimers. Mg(2+) is required as a cofactor. The cofactor is K(+).

It is found in the cytoplasm. The enzyme catalyses L-methionine + ATP + H2O = S-adenosyl-L-methionine + phosphate + diphosphate. It participates in amino-acid biosynthesis; S-adenosyl-L-methionine biosynthesis; S-adenosyl-L-methionine from L-methionine: step 1/1. In terms of biological role, catalyzes the formation of S-adenosylmethionine (AdoMet) from methionine and ATP. The overall synthetic reaction is composed of two sequential steps, AdoMet formation and the subsequent tripolyphosphate hydrolysis which occurs prior to release of AdoMet from the enzyme. The chain is S-adenosylmethionine synthase from Clostridioides difficile (strain 630) (Peptoclostridium difficile).